Reading from the N-terminus, the 787-residue chain is Mitochondrial intermediate peptidase (787 aa).

Residues 1–36 (MQNKVLRGILFKNVPLGYSYNRSIRHPTFGNSIIRW) constitute a mitochondrion transit peptide. Histidine 573 is a Zn(2+) binding site. The active site involves glutamate 574. Histidine 577 and histidine 580 together coordinate Zn(2+).

The protein belongs to the peptidase M3 family. Requires Zn(2+) as cofactor.

It localises to the mitochondrion matrix. It catalyses the reaction Release of an N-terminal octapeptide as second stage of processing of some proteins imported into the mitochondrion.. Its function is as follows. Cleaves proteins, imported into the mitochondrion, to their mature size. While most mitochondrial precursor proteins are processed to the mature form in one step by mitochondrial processing peptidase (MPP), the sequential cleavage by MIP of an octapeptide after initial processing by MPP is a required step for a subgroup of nuclear-encoded precursor proteins destined for the matrix or the inner membrane. This is Mitochondrial intermediate peptidase (OCT1) from Vanderwaltozyma polyspora (strain ATCC 22028 / DSM 70294 / BCRC 21397 / CBS 2163 / NBRC 10782 / NRRL Y-8283 / UCD 57-17) (Kluyveromyces polysporus).